We begin with the raw amino-acid sequence, 182 residues long: UPF0587 protein YCR090C (182 aa).

Zn(2+) is bound by residues cysteine 36, cysteine 39, cysteine 70, and cysteine 73.

It belongs to the UPF0587 family.

This is UPF0587 protein YCR090C from Saccharomyces cerevisiae (strain ATCC 204508 / S288c) (Baker's yeast).